The following is a 187-amino-acid chain: Elongation factor P (187 aa).

It belongs to the elongation factor P family.

It localises to the cytoplasm. It participates in protein biosynthesis; polypeptide chain elongation. Its function is as follows. Involved in peptide bond synthesis. Stimulates efficient translation and peptide-bond synthesis on native or reconstituted 70S ribosomes in vitro. Probably functions indirectly by altering the affinity of the ribosome for aminoacyl-tRNA, thus increasing their reactivity as acceptors for peptidyl transferase. This chain is Elongation factor P, found in Corynebacterium aurimucosum (strain ATCC 700975 / DSM 44827 / CIP 107346 / CN-1) (Corynebacterium nigricans).